The chain runs to 101 residues: Small ribosomal subunit protein uS14 (101 aa).

The disordered stretch occupies residues 53–72 (RDAAAVRVRNRDSHDGRPRG). Over residues 61–70 (RNRDSHDGRP) the composition is skewed to basic and acidic residues.

This sequence belongs to the universal ribosomal protein uS14 family. In terms of assembly, part of the 30S ribosomal subunit. Contacts proteins S3 and S10.

Binds 16S rRNA, required for the assembly of 30S particles and may also be responsible for determining the conformation of the 16S rRNA at the A site. In Corynebacterium glutamicum (strain ATCC 13032 / DSM 20300 / JCM 1318 / BCRC 11384 / CCUG 27702 / LMG 3730 / NBRC 12168 / NCIMB 10025 / NRRL B-2784 / 534), this protein is Small ribosomal subunit protein uS14.